Reading from the N-terminus, the 432-residue chain is Adenylosuccinate synthetase (432 aa).

Residues 13–19 (GDEGKGK) and 41–43 (GHT) each bind GTP. The active-site Proton acceptor is aspartate 14. Aspartate 14 and glycine 41 together coordinate Mg(2+). IMP-binding positions include 14 to 17 (DEGK), 39 to 42 (NAGH), threonine 130, arginine 144, glutamine 225, threonine 240, and arginine 304. Catalysis depends on histidine 42, which acts as the Proton donor. 300-306 (ATTGRRR) contacts substrate. GTP contacts are provided by residues arginine 306, 332 to 334 (KLD), and 415 to 417 (STG).

The protein belongs to the adenylosuccinate synthetase family. As to quaternary structure, homodimer. Mg(2+) serves as cofactor.

It localises to the cytoplasm. It carries out the reaction IMP + L-aspartate + GTP = N(6)-(1,2-dicarboxyethyl)-AMP + GDP + phosphate + 2 H(+). It participates in purine metabolism; AMP biosynthesis via de novo pathway; AMP from IMP: step 1/2. Plays an important role in the de novo pathway of purine nucleotide biosynthesis. Catalyzes the first committed step in the biosynthesis of AMP from IMP. This is Adenylosuccinate synthetase from Erwinia tasmaniensis (strain DSM 17950 / CFBP 7177 / CIP 109463 / NCPPB 4357 / Et1/99).